Here is a 21-residue protein sequence, read N- to C-terminus: Alpha-aminoadipic semialdehyde dehydrogenase (21 aa).

It belongs to the aldehyde dehydrogenase family. As to quaternary structure, homotetramer.

It catalyses the reaction (S)-2-amino-6-oxohexanoate + NADP(+) + H2O = L-2-aminoadipate + NADPH + 2 H(+). The enzyme catalyses (S)-2-amino-6-oxohexanoate + NAD(+) + H2O = L-2-aminoadipate + NADH + 2 H(+). The protein is Alpha-aminoadipic semialdehyde dehydrogenase (aldh7a1) of Ctenopharyngodon idella (Grass carp).